A 174-amino-acid polypeptide reads, in one-letter code: Guided entry of tail-anchored proteins factor 1 (174 aa).

At 1 to 8 (MSAAEADR) the chain is on the lumenal side. The helical transmembrane segment at 9-29 (WAWLLVLSFVFGCNVLRILLP) threads the bilayer. The Cytoplasmic segment spans residues 30-99 (SFSFFMSRVL…VKARTAQLAK (70 aa)). Residues 39–94 (LQKDAEQESQMRAEIQGMKQELSTVNMMDEFARYARLERKINKMTDKLKTHVKART) adopt a coiled-coil conformation. Residues 39–97 (LQKDAEQESQMRAEIQGMKQELSTVNMMDEFARYARLERKINKMTDKLKTHVKARTAQL) are interaction with GET3/TRC40. Residues 100-120 (IKWVISVAFYILQAALMVSLI) traverse the membrane as a helical segment. Residues 121–148 (WKYYSVPVAVVPSKWITPLDRLVAFPTR) are Lumenal-facing. Residues 149-169 (VAGGVGITCWILVCNKVVAIV) form a helical membrane-spanning segment. The Cytoplasmic segment spans residues 170 to 174 (LHPFS).

The protein belongs to the WRB/GET1 family. In terms of assembly, component of the Golgi to ER traffic (GET) complex, which is composed of GET1/WRB, CAMLG/GET2 and GET3. Within the complex, GET1 and CAMLG form a heterotetramer which is stabilized by phosphatidylinositol binding and which binds to the GET3 homodimer. Interacts with CAMLG (via C-terminus). GET3 shows a higher affinity for CAMLG than for GET1.

It localises to the endoplasmic reticulum membrane. Its function is as follows. Required for the post-translational delivery of tail-anchored (TA) proteins to the endoplasmic reticulum. Together with CAMLG/GET2, acts as a membrane receptor for soluble GET3/TRC40, which recognizes and selectively binds the transmembrane domain of TA proteins in the cytosol. Required to ensure correct topology and ER insertion of CAMLG. This is Guided entry of tail-anchored proteins factor 1 from Bos taurus (Bovine).